A 127-amino-acid polypeptide reads, in one-letter code: Holo-[acyl-carrier-protein] synthase (127 aa).

The Mg(2+) site is built by Asp8 and Glu57.

It belongs to the P-Pant transferase superfamily. AcpS family. The cofactor is Mg(2+).

Its subcellular location is the cytoplasm. The enzyme catalyses apo-[ACP] + CoA = holo-[ACP] + adenosine 3',5'-bisphosphate + H(+). Its function is as follows. Transfers the 4'-phosphopantetheine moiety from coenzyme A to a Ser of acyl-carrier-protein. The sequence is that of Holo-[acyl-carrier-protein] synthase from Hydrogenovibrio crunogenus (strain DSM 25203 / XCL-2) (Thiomicrospira crunogena).